The chain runs to 332 residues: Glycerol-3-phosphate dehydrogenase [NAD(P)+] (332 aa).

3 residues coordinate NADPH: Trp-11, Arg-30, and Lys-108. 3 residues coordinate sn-glycerol 3-phosphate: Lys-108, Gly-137, and Ser-139. Ala-141 is an NADPH binding site. Lys-192, Asp-245, Ser-255, Arg-256, and Asn-257 together coordinate sn-glycerol 3-phosphate. The active-site Proton acceptor is Lys-192. Arg-256 provides a ligand contact to NADPH. NADPH-binding residues include Val-280 and Glu-282.

Belongs to the NAD-dependent glycerol-3-phosphate dehydrogenase family.

Its subcellular location is the cytoplasm. It catalyses the reaction sn-glycerol 3-phosphate + NAD(+) = dihydroxyacetone phosphate + NADH + H(+). The catalysed reaction is sn-glycerol 3-phosphate + NADP(+) = dihydroxyacetone phosphate + NADPH + H(+). Its pathway is membrane lipid metabolism; glycerophospholipid metabolism. Its function is as follows. Catalyzes the reduction of the glycolytic intermediate dihydroxyacetone phosphate (DHAP) to sn-glycerol 3-phosphate (G3P), the key precursor for phospholipid synthesis. The polypeptide is Glycerol-3-phosphate dehydrogenase [NAD(P)+] (Burkholderia lata (strain ATCC 17760 / DSM 23089 / LMG 22485 / NCIMB 9086 / R18194 / 383)).